The sequence spans 334 residues: MLTYAQAGVDEEKTARALREIIRTARETFKLRKGKVGEPGDIGHYAALLDFGNFYLAMTTDGVGTKVLVAEAVGKFDTIGIDMIAMNVNDLLCVGAEPLALVDYFAVKEPNEEVFKQVAKGLYKGAEEAGVAIVGGETAVMPDLINGYDLAGTAIGIVEKGKVITGERIRPGDSVIGISSSGIHSNGLTLARKLLIPKYGLDYEYEGRKLWEWLLEPTRIYVRPILELINSVEVHGLAHITGGGLLNLKRLTNYGFELEMPPIEGIFKLIHENGVPLDEMFRVFNMGVGFIVVVPQEEKEEALEILSRHYKSYELGNVTRELGKIKVKNYGITL.

Belongs to the AIR synthase family.

The protein resides in the cytoplasm. The catalysed reaction is 2-formamido-N(1)-(5-O-phospho-beta-D-ribosyl)acetamidine + ATP = 5-amino-1-(5-phospho-beta-D-ribosyl)imidazole + ADP + phosphate + H(+). The protein operates within purine metabolism; IMP biosynthesis via de novo pathway; 5-amino-1-(5-phospho-D-ribosyl)imidazole from N(2)-formyl-N(1)-(5-phospho-D-ribosyl)glycinamide: step 2/2. This is Phosphoribosylformylglycinamidine cyclo-ligase from Pyrococcus abyssi (strain GE5 / Orsay).